We begin with the raw amino-acid sequence, 205 residues long: Holliday junction branch migration complex subunit RuvA (205 aa).

Residues 1–64 are domain I; it reads MIGRLRGIVL…EDAQLLYGFN (64 aa). Residues 65–143 are domain II; sequence DKQERALFRE…GLNGDLFNQS (79 aa). The flexible linker stretch occupies residues 144–156; the sequence is SDINLPATAKQTT. Residues 157–205 form a domain III region; that stretch reads SDADSEAEAAAALVSLGYKPQEASRMVSKIAKPGADCETLIREALRAVL.

The protein belongs to the RuvA family. As to quaternary structure, homotetramer. Forms an RuvA(8)-RuvB(12)-Holliday junction (HJ) complex. HJ DNA is sandwiched between 2 RuvA tetramers; dsDNA enters through RuvA and exits via RuvB. An RuvB hexamer assembles on each DNA strand where it exits the tetramer. Each RuvB hexamer is contacted by two RuvA subunits (via domain III) on 2 adjacent RuvB subunits; this complex drives branch migration. In the full resolvosome a probable DNA-RuvA(4)-RuvB(12)-RuvC(2) complex forms which resolves the HJ.

Its subcellular location is the cytoplasm. In terms of biological role, the RuvA-RuvB-RuvC complex processes Holliday junction (HJ) DNA during genetic recombination and DNA repair, while the RuvA-RuvB complex plays an important role in the rescue of blocked DNA replication forks via replication fork reversal (RFR). RuvA specifically binds to HJ cruciform DNA, conferring on it an open structure. The RuvB hexamer acts as an ATP-dependent pump, pulling dsDNA into and through the RuvAB complex. HJ branch migration allows RuvC to scan DNA until it finds its consensus sequence, where it cleaves and resolves the cruciform DNA. The chain is Holliday junction branch migration complex subunit RuvA from Photorhabdus laumondii subsp. laumondii (strain DSM 15139 / CIP 105565 / TT01) (Photorhabdus luminescens subsp. laumondii).